Here is a 210-residue protein sequence, read N- to C-terminus: Somatotropin-2 (210 aa).

An N-terminal signal peptide occupies residues 1-22; the sequence is MGQVFLLMPVLLVSCFLSQGAA. H38 lines the Zn(2+) pocket. A disulfide bridge connects residues C71 and C183. Position 192 (E192) interacts with Zn(2+). The cysteines at positions 200 and 208 are disulfide-linked.

This sequence belongs to the somatotropin/prolactin family.

Its subcellular location is the secreted. In terms of biological role, growth hormone plays an important role in growth control and is involved in the regulation of several anabolic processes. Implicated as an osmoregulatory substance important for seawater adaptation. This chain is Somatotropin-2 (gh2), found in Oncorhynchus nerka (Sockeye salmon).